A 64-amino-acid chain; its full sequence is Large ribosomal subunit protein bL35 (64 aa).

Positions 1–22 (MPKAKTHSGASKRFRRTGTGKI) are disordered.

This sequence belongs to the bacterial ribosomal protein bL35 family.

In Mycobacterium tuberculosis (strain ATCC 25177 / H37Ra), this protein is Large ribosomal subunit protein bL35.